The sequence spans 138 residues: Mitochondrial import inner membrane translocase subunit tim-16 (138 aa).

Positions 32-43 (TQQAAARHAAAT) are enriched in low complexity. Disordered regions lie at residues 32–58 (TQQA…NANA) and 118–138 (LSRL…NSKE). Residues 44–56 (GQSPSETKENANA) show a composition bias toward polar residues. The tract at residues 66 to 119 (ESLQILNVKTPLNREDVEKHYEHLFAINDKAKGGTFYLQSKVYRAKERIDEELS) is J-like.

It belongs to the TIM16/PAM16 family. In terms of assembly, probable component of the PAM complex at least composed of a mitochondrial HSP70 protein, GrpE, tim-44, tim-16 and tim-14. Associates with the TIM23 complex.

It localises to the mitochondrion inner membrane. Regulates ATP-dependent protein translocation into the mitochondrial matrix. The protein is Mitochondrial import inner membrane translocase subunit tim-16 of Caenorhabditis briggsae.